The chain runs to 157 residues: 2-C-methyl-D-erythritol 2,4-cyclodiphosphate synthase (157 aa).

A divalent metal cation contacts are provided by Asp-8 and His-10. 4-CDP-2-C-methyl-D-erythritol 2-phosphate is bound by residues 8 to 10 (DVH) and 34 to 35 (HS). His-42 serves as a coordination point for a divalent metal cation. 4-CDP-2-C-methyl-D-erythritol 2-phosphate contacts are provided by residues 56–58 (DIG), 61–65 (FPDSD), 132–135 (TTTE), Phe-139, and Arg-142.

The protein belongs to the IspF family. In terms of assembly, homotrimer. A divalent metal cation serves as cofactor.

The catalysed reaction is 4-CDP-2-C-methyl-D-erythritol 2-phosphate = 2-C-methyl-D-erythritol 2,4-cyclic diphosphate + CMP. Its pathway is isoprenoid biosynthesis; isopentenyl diphosphate biosynthesis via DXP pathway; isopentenyl diphosphate from 1-deoxy-D-xylulose 5-phosphate: step 4/6. In terms of biological role, involved in the biosynthesis of isopentenyl diphosphate (IPP) and dimethylallyl diphosphate (DMAPP), two major building blocks of isoprenoid compounds. Catalyzes the conversion of 4-diphosphocytidyl-2-C-methyl-D-erythritol 2-phosphate (CDP-ME2P) to 2-C-methyl-D-erythritol 2,4-cyclodiphosphate (ME-CPP) with a corresponding release of cytidine 5-monophosphate (CMP). This is 2-C-methyl-D-erythritol 2,4-cyclodiphosphate synthase from Syntrophomonas wolfei subsp. wolfei (strain DSM 2245B / Goettingen).